Here is a 191-residue protein sequence, read N- to C-terminus: MARSFAIAVICIVLIAGVTGQAPTSPPTATPAPPTPTTPPPAATPPPVSAPPPVTTSPPPVTTAPPPANPPPPVSSPPPASPPPATPPPVASPPPPVASPPPATPPPVATPPPAPLASPPAQVPAPAPTTKPDSPSPSPSSSPPLPSSDAPGPSTDSISPAPSPTDVNDQNGASKMVSSLVFGSVLVWFMI.

Residues 1-20 form the signal peptide; the sequence is MARSFAIAVICIVLIAGVTG. The disordered stretch occupies residues 20-172; it reads GQAPTSPPTA…SPTDVNDQNG (153 aa). Gln-21 carries the post-translational modification Pyrrolidone carboxylic acid. 4-hydroxyproline occurs at positions 23, 26, 27, 31, and 33. A compositionally biased stretch (pro residues) spans 24–146; it reads TSPPTATPAP…PSPSSSPPLP (123 aa). O-linked (Ara...) hydroxyproline glycosylation is found at Pro-26, Pro-27, Pro-31, and Pro-33. Residues 155-172 show a composition bias toward polar residues; it reads TDSISPAPSPTDVNDQNG. Gly-172 carries the GPI-anchor amidated glycine lipid modification. Residues 173–191 constitute a propeptide, removed in mature form; that stretch reads ASKMVSSLVFGSVLVWFMI.

This sequence belongs to the classical AGP family. O-glycosylated on hydroxyprolines; noncontiguous hydroxylproline residues are glycosylated with arabinogalactan. As to expression, predominantly expressed in flowers and at a lower level in leaves and siliques.

It is found in the cell membrane. In terms of biological role, proteoglycan that seems to be implicated in diverse developmental roles such as differentiation, cell-cell recognition, embryogenesis and programmed cell death. The sequence is that of Classical arabinogalactan protein 9 (AGP9) from Arabidopsis thaliana (Mouse-ear cress).